Reading from the N-terminus, the 216-residue chain is MLGIGAFKQRMPRPGEALPGREQALPLHNTHLVNGHPLRGEFTGLAQVQFGLGCFWGAERKFWNVPGVYTTAVGYAGGQTPNATYSEVCSGQTGHTEAVLVVFDEQAVSFAQLLRTFWESHDPTQGMQQGNDVGTQYRSAIYCTTQAQYDAALASRDAYQQQLTASGYGDITTEIRFPAPTFYYAEDDHQQYLAKHPNGYCGLGGTGVSCPIGLDA.

C54 is a catalytic residue.

The protein belongs to the MsrA Met sulfoxide reductase family.

It carries out the reaction L-methionyl-[protein] + [thioredoxin]-disulfide + H2O = L-methionyl-(S)-S-oxide-[protein] + [thioredoxin]-dithiol. The catalysed reaction is [thioredoxin]-disulfide + L-methionine + H2O = L-methionine (S)-S-oxide + [thioredoxin]-dithiol. Its function is as follows. Has an important function as a repair enzyme for proteins that have been inactivated by oxidation. Catalyzes the reversible oxidation-reduction of methionine sulfoxide in proteins to methionine. The protein is Peptide methionine sulfoxide reductase MsrA of Xanthomonas campestris pv. phaseoli.